Consider the following 296-residue polypeptide: Transcription factor MYB72 (296 aa).

2 consecutive HTH myb-type domains span residues 11–63 (KNKV…INYL) and 64–118 (RPDV…KKRL). 2 consecutive DNA-binding regions (H-T-H motif) follow at residues 39-63 (WRSL…INYL) and 91-114 (WSKI…NTHL). The interval 118-144 (LTPSSSSSSLSSTHDQSTKADHDKNCD) is disordered. Basic and acidic residues predominate over residues 133–144 (QSTKADHDKNCD).

In terms of assembly, interacts with EIL3.

The protein localises to the nucleus. In terms of biological role, involved in metal ions homeostasis, including iron ions (Fe) acquisition, via the regulation of NAS4 and NAS2 genes expression. Necessary for plant survival in alkaline soil where iron availability is greatly restricted. Involved in the up-regulation of several biosynthesis genes of secondary metabolites involved in iron uptake under conditions of iron deficiency. Triggers tolerance to nickel (Ni) and zinc (Zn) ions. Required in the roots during early signaling steps of rhizobacteria-mediated (e.g. P.fluorescens WCS417r) and beneficial fungi-mediated (e.g. T.asperellum T34) broad-spectrum induced systemic resistance (ISR) against several pathogens (e.g. P.syringae pv tomato, H.parasitica, P.cucumerina, A.brassicicola and B.cinerea) and implying enhanced callose deposition. Required for the induction of some genes (e.g. BGLU42) upon rhizobacteria-mediated ISR. This Arabidopsis thaliana (Mouse-ear cress) protein is Transcription factor MYB72.